A 603-amino-acid polypeptide reads, in one-letter code: Sorting nexin-41 (603 aa).

Positions 1–36 are disordered; sequence MNSFRESDEEDNNPFSGTNHLYASGIGAVPEGDDDF. Positions 121 to 241 constitute a PX domain; sequence AEGSLGALRI…QKFLNPEYIW (121 aa). A 1,2-diacyl-sn-glycero-3-phospho-(1D-myo-inositol-3-phosphate) contacts are provided by Arg159, Ser161, Lys185, and Arg208.

It belongs to the sorting nexin family.

Its subcellular location is the endosome membrane. The protein localises to the endomembrane system. In terms of biological role, may be required for cytoplasm to vacuole transport (Cvt) and pexophagy. The protein is Sorting nexin-41 (SNX41) of Eremothecium gossypii (strain ATCC 10895 / CBS 109.51 / FGSC 9923 / NRRL Y-1056) (Yeast).